The chain runs to 465 residues: Branched-chain amino acid permease BcaP (465 aa).

The next 12 helical transmembrane spans lie at 28–48 (FLAL…PGQV), 56–76 (GVVF…LAYA), 88–110 (AYSW…ALLA), 149–169 (DGGI…IIVF), 181–201 (ILVV…ITVI), 219–239 (FGGF…YIGF), 259–279 (GIIG…LVLV), 309–329 (VVTA…VLAG), 359–379 (VWTL…AFLA), 380–400 (QLIS…IYSL), 416–436 (PFYP…FWGL), and 438–458 (VQAK…YFAY).

It belongs to the amino acid-polyamine-organocation (APC) superfamily.

It is found in the cell membrane. Functionally, branched-chain amino acid transport system that specifically transports branched-chain amino acids (BCAAs) (isoleucine, leucine and valine) and, to a lesser extent, methionine. Important for CodY-mediated regulation, and required for optimal growth in media containing free amino acids as the only amino acid source. In Lactococcus lactis subsp. cremoris (strain MG1363), this protein is Branched-chain amino acid permease BcaP.